The primary structure comprises 315 residues: Phosphatidylglycerol--prolipoprotein diacylglyceryl transferase (315 aa).

A run of 2 helical transmembrane segments spans residues 19-39 (FTIH…VWIL) and 93-113 (VWEG…VAFL). Arginine 141 is a binding site for a 1,2-diacyl-sn-glycero-3-phospho-(1'-sn-glycerol). 2 helical membrane-spanning segments follow: residues 188 to 208 (LFHP…ALII) and 256 to 276 (MWTA…LYQY).

The protein belongs to the Lgt family.

Its subcellular location is the cell membrane. The catalysed reaction is L-cysteinyl-[prolipoprotein] + a 1,2-diacyl-sn-glycero-3-phospho-(1'-sn-glycerol) = an S-1,2-diacyl-sn-glyceryl-L-cysteinyl-[prolipoprotein] + sn-glycerol 1-phosphate + H(+). The protein operates within protein modification; lipoprotein biosynthesis (diacylglyceryl transfer). In terms of biological role, catalyzes the transfer of the diacylglyceryl group from phosphatidylglycerol to the sulfhydryl group of the N-terminal cysteine of a prolipoprotein, the first step in the formation of mature lipoproteins. The chain is Phosphatidylglycerol--prolipoprotein diacylglyceryl transferase from Bifidobacterium longum subsp. infantis (strain ATCC 15697 / DSM 20088 / JCM 1222 / NCTC 11817 / S12).